The primary structure comprises 195 residues: COMM domain-containing protein 3 (195 aa).

In terms of domain architecture, COMM spans His-124–Thr-193.

Belongs to the COMM domain-containing protein 3 family. Component of the commander complex consisting of the CCC subcomplex and the retriever subcomplex. Component of the CCC (COMMD/CCDC22/CCDC93) subcomplex consisting of COMMD1, COMMD2, COMMD3, COMMD4, COMMD5, COMMD6, COMMD7, COMMD8, COMMD9, COMMD10, CCDC22 and CCDC93; within the complex forms a heterodimer with COMMD2. Interacts with NFKB1/p105. Interacts with CCDC22, CCDC93, SCNN1B, CUL3, CUL4A, CUL4B, CUL5. Widely expressed with highest expression in thymus.

It is found in the cytoplasm. The protein localises to the nucleus. Functionally, scaffold protein in the commander complex that is essential for endosomal recycling of transmembrane cargos; the commander complex is composed of the CCC subcomplex and the retriever subcomplex. May modulate activity of cullin-RING E3 ubiquitin ligase (CRL) complexes. May down-regulate activation of NF-kappa-B. Modulates Na(+) transport in epithelial cells by regulation of apical cell surface expression of amiloride-sensitive sodium channel (ENaC) subunits. This Homo sapiens (Human) protein is COMM domain-containing protein 3 (COMMD3).